The chain runs to 475 residues: Ribulose bisphosphate carboxylase large chain (475 aa).

The propeptide occupies 1 to 2 (MS). Pro-3 carries the post-translational modification N-acetylproline. Lys-14 bears the N6,N6,N6-trimethyllysine mark. Asn-123 and Thr-173 together coordinate substrate. Lys-175 (proton acceptor) is an active-site residue. A substrate-binding site is contributed by Lys-177. Mg(2+)-binding residues include Lys-201, Asp-203, and Glu-204. Lys-201 is modified (N6-carboxylysine). His-294 functions as the Proton acceptor in the catalytic mechanism. Arg-295, His-327, and Ser-379 together coordinate substrate.

The protein belongs to the RuBisCO large chain family. Type I subfamily. In terms of assembly, heterohexadecamer of 8 large chains and 8 small chains; disulfide-linked. The disulfide link is formed within the large subunit homodimers. Mg(2+) is required as a cofactor. Post-translationally, the disulfide bond which can form in the large chain dimeric partners within the hexadecamer appears to be associated with oxidative stress and protein turnover.

The protein resides in the plastid. Its subcellular location is the chloroplast. The enzyme catalyses 2 (2R)-3-phosphoglycerate + 2 H(+) = D-ribulose 1,5-bisphosphate + CO2 + H2O. It catalyses the reaction D-ribulose 1,5-bisphosphate + O2 = 2-phosphoglycolate + (2R)-3-phosphoglycerate + 2 H(+). Functionally, ruBisCO catalyzes two reactions: the carboxylation of D-ribulose 1,5-bisphosphate, the primary event in carbon dioxide fixation, as well as the oxidative fragmentation of the pentose substrate in the photorespiration process. Both reactions occur simultaneously and in competition at the same active site. The polypeptide is Ribulose bisphosphate carboxylase large chain (Gossypium hirsutum (Upland cotton)).